We begin with the raw amino-acid sequence, 152 residues long: Deoxyuridine 5'-triphosphate nucleotidohydrolase (152 aa).

Substrate-binding positions include 72–74 (RSG), Asn-85, and 89–91 (TID).

Belongs to the dUTPase family. It depends on Mg(2+) as a cofactor.

The enzyme catalyses dUTP + H2O = dUMP + diphosphate + H(+). Its pathway is pyrimidine metabolism; dUMP biosynthesis; dUMP from dCTP (dUTP route): step 2/2. Functionally, this enzyme is involved in nucleotide metabolism: it produces dUMP, the immediate precursor of thymidine nucleotides and it decreases the intracellular concentration of dUTP so that uracil cannot be incorporated into DNA. This chain is Deoxyuridine 5'-triphosphate nucleotidohydrolase, found in Rhodopseudomonas palustris (strain BisB5).